Here is a 766-residue protein sequence, read N- to C-terminus: Single-minded homolog 1 (766 aa).

Residues 1-53 enclose the bHLH domain; sequence MKEKSKNAARTRREKENSEFYELAKLLPLPSAITSQLDKASIIRLTTSYLKMR. PAS domains are found at residues 77 to 147 and 218 to 288; these read GREL…QPYH and PPSA…LVKG. In terms of domain architecture, PAC spans 292-335; that stretch reads TKYYRFLAKHGGWVWVQSYATIVHNSRSSRPHCIVSVNYVLTDT. The region spanning 336–766 is the Single-minded C-terminal domain; sequence EYKGLQLSLD…GTSVIITNGS (431 aa). The span at 353-365 shows a compositional bias: polar residues; it reads AFSYTSSSTPTMT. Disordered regions lie at residues 353–431 and 528–563; these read AFSY…SQHD and WDEDSVVSSPDPGSASESGDRYRTEQYQSSPHEPSK. The Nuclear localization signal signature appears at 368-387; that stretch reads RKGAKSRLSSSKSKSRTSPY. The segment covering 373-385 has biased composition (low complexity); it reads SRLSSSKSKSRTS. The segment covering 394–404 has biased composition (basic and acidic residues); the sequence is HTERSESDHDS.

In terms of assembly, efficient DNA binding requires dimerization with another bHLH protein. Heterodimer; forms a heterodimer with ARNT, ARNT2.

It localises to the nucleus. Its function is as follows. Transcriptional factor that may have pleiotropic effects during embryogenesis and in the adult. In Homo sapiens (Human), this protein is Single-minded homolog 1 (SIM1).